A 218-amino-acid chain; its full sequence is N-(5'-phosphoribosyl)anthranilate isomerase (218 aa).

It belongs to the TrpF family.

The catalysed reaction is N-(5-phospho-beta-D-ribosyl)anthranilate = 1-(2-carboxyphenylamino)-1-deoxy-D-ribulose 5-phosphate. The protein operates within amino-acid biosynthesis; L-tryptophan biosynthesis; L-tryptophan from chorismate: step 3/5. The sequence is that of N-(5'-phosphoribosyl)anthranilate isomerase from Stenotrophomonas maltophilia (strain R551-3).